Here is a 24-residue protein sequence, read N- to C-terminus: Calreticulin (24 aa).

The protein belongs to the calreticulin family. In terms of assembly, monomer. Component of an EIF2 complex at least composed of CELF1/CUGBP1, CALR, CALR3, EIF2S1, EIF2S2, HSP90B1 and HSPA5. Interacts with PDIA3/ERp57 and SPACA9. Interacts with TRIM21. Interacts with NR3C1. Interacts with PPIB. Interacts (via P-domain) with PDIA5. Interacts with CLCC1. In terms of tissue distribution, pancreas.

It localises to the endoplasmic reticulum lumen. Its subcellular location is the cytoplasm. The protein resides in the cytosol. The protein localises to the cytolytic granule. It is found in the secreted. It localises to the extracellular space. Its subcellular location is the extracellular matrix. The protein resides in the cell surface. The protein localises to the sarcoplasmic reticulum lumen. It is found in the cytoplasmic vesicle. It localises to the secretory vesicle. Its subcellular location is the cortical granule. Calcium-binding chaperone that promotes folding, oligomeric assembly and quality control in the endoplasmic reticulum (ER) via the calreticulin/calnexin cycle. This lectin interacts transiently with almost all of the monoglucosylated glycoproteins that are synthesized in the ER. Interacts with the DNA-binding domain of NR3C1 and mediates its nuclear export. Involved in maternal gene expression regulation. May participate in oocyte maturation via the regulation of calcium homeostasis. Present in the cortical granules of non-activated oocytes, is exocytosed during the cortical reaction in response to oocyte activation and might participate in the block to polyspermy. The chain is Calreticulin (CALR) from Canis lupus familiaris (Dog).